Here is a 370-residue protein sequence, read N- to C-terminus: Anthranilate phosphoribosyltransferase (370 aa).

The interval methionine 1 to tryptophan 27 is disordered. Residues glycine 107, glycine 110–aspartate 111, threonine 115, asparagine 117–threonine 120, lysine 135–serine 143, and glycine 147 each bind 5-phospho-alpha-D-ribose 1-diphosphate. Glycine 107 is an anthranilate binding site. Residue serine 119 coordinates Mg(2+). Residue asparagine 138 participates in anthranilate binding. Position 193 (arginine 193) interacts with anthranilate. Mg(2+) is bound by residues aspartate 251 and glutamate 252.

Belongs to the anthranilate phosphoribosyltransferase family. As to quaternary structure, homodimer. It depends on Mg(2+) as a cofactor.

It catalyses the reaction N-(5-phospho-beta-D-ribosyl)anthranilate + diphosphate = 5-phospho-alpha-D-ribose 1-diphosphate + anthranilate. It participates in amino-acid biosynthesis; L-tryptophan biosynthesis; L-tryptophan from chorismate: step 2/5. Functionally, catalyzes the transfer of the phosphoribosyl group of 5-phosphorylribose-1-pyrophosphate (PRPP) to anthranilate to yield N-(5'-phosphoribosyl)-anthranilate (PRA). The chain is Anthranilate phosphoribosyltransferase from Mycobacterium bovis (strain ATCC BAA-935 / AF2122/97).